The following is a 326-amino-acid chain: Flavanone 3-dioxygenase 3 (326 aa).

Residues 1 to 15 (MSDTSKGIPQEQLPS) are compositionally biased toward polar residues. The tract at residues 1–21 (MSDTSKGIPQEQLPSQELHPP) is disordered. The 102-residue stretch at 175 to 276 (EGLQLLSVNC…RISLASIHGF (102 aa)) folds into the Fe2OG dioxygenase domain. Residues histidine 200, aspartate 202, and histidine 257 each coordinate Fe cation. Arginine 267 is a binding site for 2-oxoglutarate.

The protein belongs to the iron/ascorbate-dependent oxidoreductase family. It depends on Fe(2+) as a cofactor. The cofactor is L-ascorbate. Expressed at very low levels in roots, leaves, stems and seeds.

It carries out the reaction a (2S)-flavan-4-one + 2-oxoglutarate + O2 = a (2R,3R)-dihydroflavonol + succinate + CO2. It participates in secondary metabolite biosynthesis; flavonoid biosynthesis. Its function is as follows. Catalyzes the 3-beta-hydroxylation of 2S-flavanones to 2R,3R-dihydroflavonols which are intermediates in the biosynthesis of flavonols, anthocyanidins, catechins and proanthocyanidins in plants. Converts (2S)-eriodictyol to (+)-taxifolin and (2S)-naringenin to (+)-(2R/3R)-dihydrokaempferol in vitro. The polypeptide is Flavanone 3-dioxygenase 3 (Oryza sativa subsp. japonica (Rice)).